The sequence spans 309 residues: Porphobilinogen deaminase (309 aa).

Position 244 is an S-(dipyrrolylmethanemethyl)cysteine (Cys-244).

Belongs to the HMBS family. As to quaternary structure, monomer. Dipyrromethane serves as cofactor.

It carries out the reaction 4 porphobilinogen + H2O = hydroxymethylbilane + 4 NH4(+). The protein operates within porphyrin-containing compound metabolism; protoporphyrin-IX biosynthesis; coproporphyrinogen-III from 5-aminolevulinate: step 2/4. Its function is as follows. Tetrapolymerization of the monopyrrole PBG into the hydroxymethylbilane pre-uroporphyrinogen in several discrete steps. The protein is Porphobilinogen deaminase of Listeria monocytogenes serotype 4b (strain CLIP80459).